A 181-amino-acid polypeptide reads, in one-letter code: Ribosome maturation factor RimM (181 aa).

The region spanning 103–181 is the PRC barrel domain; it reads EGDYYWSQLE…EMVVDWDPEF (79 aa).

This sequence belongs to the RimM family. Binds ribosomal protein uS19.

It localises to the cytoplasm. Functionally, an accessory protein needed during the final step in the assembly of 30S ribosomal subunit, possibly for assembly of the head region. Essential for efficient processing of 16S rRNA. May be needed both before and after RbfA during the maturation of 16S rRNA. It has affinity for free ribosomal 30S subunits but not for 70S ribosomes. In Marinomonas sp. (strain MWYL1), this protein is Ribosome maturation factor RimM.